A 644-amino-acid polypeptide reads, in one-letter code: Tripeptidyl-peptidase sed1 (644 aa).

The signal sequence occupies residues 1–18 (MRLSHVLLGTAAAAGVLA). A propeptide spans 19–196 (SPTPNDYVVH…KARSIEKRSF (178 aa)) (removed in mature form). The 420-residue stretch at 224–643 (AITPLCISAL…PALLDLFMSL (420 aa)) folds into the Peptidase S53 domain. Asn-235 is a glycosylation site (N-linked (GlcNAc...) asparagine). Residues Glu-300 and Asp-304 each act as charge relay system in the active site. Residues Asn-326, Asn-332, and Asn-519 are each glycosylated (N-linked (GlcNAc...) asparagine). Ser-561 serves as the catalytic Charge relay system. Ca(2+) is bound by residues Asp-602, Ile-603, Gly-621, and Asp-623.

Requires Ca(2+) as cofactor. Post-translationally, N-glycosylated.

The protein resides in the secreted. It is found in the extracellular space. The enzyme catalyses Release of an N-terminal tripeptide from a polypeptide.. Functionally, secreted tripeptidyl-peptidase which degrades proteins at acidic pHs and is involved in virulence. In Aspergillus fumigatus (strain ATCC MYA-4609 / CBS 101355 / FGSC A1100 / Af293) (Neosartorya fumigata), this protein is Tripeptidyl-peptidase sed1 (sed1).